Reading from the N-terminus, the 324-residue chain is Type II restriction enzyme AplI (324 aa).

The protein belongs to the BsuBI/PstI type II restriction endonuclease family. It depends on Mg(2+) as a cofactor.

The enzyme catalyses Endonucleolytic cleavage of DNA to give specific double-stranded fragments with terminal 5'-phosphates.. Activated by K(+) and Na(+) ions, whereas NH(4)(+) ions appear to inhibit endonuclease activity. In terms of biological role, a P subtype restriction enzyme that recognizes the double-stranded sequence 5'-CTGCAG-3' and cleaves after A-5. The polypeptide is Type II restriction enzyme AplI (aplIR) (Arthrospira platensis (strain NIES-39 / UTEX 3086 / IAM M-135) (Spirulina platensis)).